The primary structure comprises 529 residues: Inosine-5'-monophosphate dehydrogenase (529 aa).

CBS domains lie at 129–185 (MVTD…SKQV) and 189–246 (MTKT…PLAT). NAD(+) contacts are provided by residues Asp283 and 334 to 336 (GVG). Residues Gly336 and Gly338 each coordinate K(+). Ser339 is an IMP binding site. Cys341 contacts K(+). The active-site Thioimidate intermediate is the Cys341. Residues 374–376 (DGG), 397–398 (GS), and 421–425 (YRGMG) each bind IMP. Arg443 serves as the catalytic Proton acceptor. Glu458 is an IMP binding site. Residues Glu511, Ser512, and His513 each coordinate K(+).

Belongs to the IMPDH/GMPR family. In terms of assembly, homotetramer. It depends on K(+) as a cofactor.

It catalyses the reaction IMP + NAD(+) + H2O = XMP + NADH + H(+). Its pathway is purine metabolism; XMP biosynthesis via de novo pathway; XMP from IMP: step 1/1. Its activity is regulated as follows. Mycophenolic acid (MPA) is a non-competitive inhibitor that prevents formation of the closed enzyme conformation by binding to the same site as the amobile flap. In contrast, mizoribine monophosphate (MZP) is a competitive inhibitor that induces the closed conformation. MPA is a potent inhibitor of mammalian IMPDHs but a poor inhibitor of the bacterial enzymes. MZP is a more potent inhibitor of bacterial IMPDH. Functionally, catalyzes the conversion of inosine 5'-phosphate (IMP) to xanthosine 5'-phosphate (XMP), the first committed and rate-limiting step in the de novo synthesis of guanine nucleotides, and therefore plays an important role in the regulation of cell growth. In Mycobacterium leprae (strain TN), this protein is Inosine-5'-monophosphate dehydrogenase.